The following is a 366-amino-acid chain: uncharacterized protein (366 aa).

6 helical membrane-spanning segments follow: residues 164 to 184 (IPLI…FADI), 188 to 208 (IVVG…RKLL), 223 to 243 (VFPI…IYSL), 256 to 276 (FIGE…LILM), 299 to 319 (FFCL…GEYL), and 325 to 345 (FIMF…LSVI).

It to A.fulgidus AF2058.

It is found in the cell membrane. This is an uncharacterized protein from Methanocaldococcus jannaschii (strain ATCC 43067 / DSM 2661 / JAL-1 / JCM 10045 / NBRC 100440) (Methanococcus jannaschii).